The primary structure comprises 347 residues: S-adenosylmethionine:tRNA ribosyltransferase-isomerase (347 aa).

This sequence belongs to the QueA family. As to quaternary structure, monomer.

It is found in the cytoplasm. It carries out the reaction 7-aminomethyl-7-carbaguanosine(34) in tRNA + S-adenosyl-L-methionine = epoxyqueuosine(34) in tRNA + adenine + L-methionine + 2 H(+). The protein operates within tRNA modification; tRNA-queuosine biosynthesis. Its function is as follows. Transfers and isomerizes the ribose moiety from AdoMet to the 7-aminomethyl group of 7-deazaguanine (preQ1-tRNA) to give epoxyqueuosine (oQ-tRNA). The protein is S-adenosylmethionine:tRNA ribosyltransferase-isomerase of Xylella fastidiosa (strain M23).